The chain runs to 218 residues: MYDIRQMLQLYFIAGTQDCPNPTEDRSQNLLLILEQALQAGITCFQFRDKSKNSLEDQPNAQKALAIQCRDLCRLYNVPFIVDDNVALAIEIDADGVHVGQKDMSPIMIRQMTDKPLIIGLSNNTLEDLWRSEQMIEVDYCGLGPVFPTNSKEKHNPPIGLDFVKKAREAGIRKPIVSIGGVKAEHVATLKQNGADGVAVITAISLASDVSQAVKRLL.

4-amino-2-methyl-5-(diphosphooxymethyl)pyrimidine-binding positions include 46–50 and Asp83; that span reads QFRDK. Mg(2+)-binding residues include Asp84 and Asp103. Ser122 contributes to the 4-amino-2-methyl-5-(diphosphooxymethyl)pyrimidine binding site. 149–151 contributes to the 2-[(2R,5Z)-2-carboxy-4-methylthiazol-5(2H)-ylidene]ethyl phosphate binding site; the sequence is TNS. 4-amino-2-methyl-5-(diphosphooxymethyl)pyrimidine is bound at residue Lys152. 2-[(2R,5Z)-2-carboxy-4-methylthiazol-5(2H)-ylidene]ethyl phosphate contacts are provided by residues Gly181 and 201–202; that span reads IT.

The protein belongs to the thiamine-phosphate synthase family. It depends on Mg(2+) as a cofactor.

It catalyses the reaction 2-[(2R,5Z)-2-carboxy-4-methylthiazol-5(2H)-ylidene]ethyl phosphate + 4-amino-2-methyl-5-(diphosphooxymethyl)pyrimidine + 2 H(+) = thiamine phosphate + CO2 + diphosphate. The catalysed reaction is 2-(2-carboxy-4-methylthiazol-5-yl)ethyl phosphate + 4-amino-2-methyl-5-(diphosphooxymethyl)pyrimidine + 2 H(+) = thiamine phosphate + CO2 + diphosphate. It carries out the reaction 4-methyl-5-(2-phosphooxyethyl)-thiazole + 4-amino-2-methyl-5-(diphosphooxymethyl)pyrimidine + H(+) = thiamine phosphate + diphosphate. Its pathway is cofactor biosynthesis; thiamine diphosphate biosynthesis; thiamine phosphate from 4-amino-2-methyl-5-diphosphomethylpyrimidine and 4-methyl-5-(2-phosphoethyl)-thiazole: step 1/1. Condenses 4-methyl-5-(beta-hydroxyethyl)thiazole monophosphate (THZ-P) and 2-methyl-4-amino-5-hydroxymethyl pyrimidine pyrophosphate (HMP-PP) to form thiamine monophosphate (TMP). The sequence is that of Thiamine-phosphate synthase from Actinobacillus pleuropneumoniae serotype 7 (strain AP76).